Here is a 219-residue protein sequence, read N- to C-terminus: Probable cutinase 4 (219 aa).

An N-terminal signal peptide occupies residues 1-17; the sequence is MILPSLLVASLSALAAA. 2 disulfide bridges follow: Cys-41–Cys-120 and Cys-67–Cys-81. A glycan (N-linked (GlcNAc...) asparagine) is linked at Asn-99. The active-site Nucleophile is the Ser-131. Cys-182 and Cys-189 form a disulfide bridge. The active site involves Asp-186. The active-site Proton donor/acceptor is His-199.

This sequence belongs to the cutinase family.

Its subcellular location is the secreted. It catalyses the reaction cutin + H2O = cutin monomers.. Its function is as follows. Catalyzes the hydrolysis of complex carboxylic polyesters found in the cell wall of plants. Degrades cutin, a macromolecule that forms the structure of the plant cuticle. The protein is Probable cutinase 4 of Aspergillus terreus (strain NIH 2624 / FGSC A1156).